A 517-amino-acid polypeptide reads, in one-letter code: Mitochondrial division protein fszA (517 aa).

GTP is bound by residues 60–64 (GGGCN), 147–149 (GTG), E178, R182, and D225. Residues 496–517 (FTNGNNNKPYNNNKNTPGSNYE) form a disordered region. The segment covering 497-517 (TNGNNNKPYNNNKNTPGSNYE) has biased composition (low complexity).

Belongs to the FtsZ family.

It localises to the mitochondrion matrix. Probably involved in mitochondrion division process. When overexpressed, induces mitochondrial tubule formation. Binds to and hydrolyzes GTP. In Dictyostelium discoideum (Social amoeba), this protein is Mitochondrial division protein fszA (fszA).